The sequence spans 843 residues: Alpha-L-fucosidase 2 (843 aa).

An N-terminal signal peptide occupies residues 1–27; the sequence is MAEKSSFFVHFSCLLLLLTIIITCGEG. Residues N62, N253, N365, and N605 are each glycosylated (N-linked (GlcNAc...) asparagine).

This sequence belongs to the glycosyl hydrolase 95 family. In terms of tissue distribution, ubiquitous. Highest expression in vascular tissues, leaf trichomes, root elongation zone and emerging lateral roots.

The protein localises to the secreted. It is found in the extracellular space. It localises to the apoplast. The catalysed reaction is an alpha-L-fucoside + H2O = L-fucose + an alcohol. Hydrolyzes alpha-1,2-linked fucose. Also active on fucosylated xyloglucan oligosaccharides. No activity with 3-fucosyllactose, p-nitrophenyl-alpha-I-fucopyranoside, lacto-N-fucopentaose II, lacto-N-fucopentaose III or alpha 1,6-fucosylated chitopentaose. Involved in apoplastic xyloglucan metabolism. The chain is Alpha-L-fucosidase 2 (FUC95A) from Arabidopsis thaliana (Mouse-ear cress).